We begin with the raw amino-acid sequence, 973 residues long: Mediator of RNA polymerase II transcription subunit 16 (973 aa).

Belongs to the Mediator complex subunit 16 family. As to quaternary structure, component of the Mediator complex.

It localises to the nucleus. Component of the Mediator complex, a coactivator involved in the regulated transcription of nearly all RNA polymerase II-dependent genes. Mediator functions as a bridge to convey information from gene-specific regulatory proteins to the basal RNA polymerase II transcription machinery. Mediator is recruited to promoters by direct interactions with regulatory proteins and serves as a scaffold for the assembly of a functional preinitiation complex with RNA polymerase II and the general transcription factors. The protein is Mediator of RNA polymerase II transcription subunit 16 (SIN4) of Candida glabrata (strain ATCC 2001 / BCRC 20586 / JCM 3761 / NBRC 0622 / NRRL Y-65 / CBS 138) (Yeast).